The sequence spans 251 residues: NAD kinase (251 aa).

Asp51 serves as the catalytic Proton acceptor. NAD(+) is bound by residues 51-52, Lys56, 113-114, Lys124, His140, Asp142, 153-158, and Ala177; these read DG, NE, and TGYSLS.

It belongs to the NAD kinase family. A divalent metal cation is required as a cofactor.

The protein resides in the cytoplasm. It carries out the reaction NAD(+) + ATP = ADP + NADP(+) + H(+). Its function is as follows. Involved in the regulation of the intracellular balance of NAD and NADP, and is a key enzyme in the biosynthesis of NADP. Catalyzes specifically the phosphorylation on 2'-hydroxyl of the adenosine moiety of NAD to yield NADP. The protein is NAD kinase of Thermosipho melanesiensis (strain DSM 12029 / CIP 104789 / BI429).